We begin with the raw amino-acid sequence, 1523 residues long: Slit homolog 3 protein (1523 aa).

The first 33 residues, 1–33 (MALGRTGAGAAVRARLALGLALASILSGPPAAA), serve as a signal peptide directing secretion. Residues 34–61 (CPTKCTCSAASVDCHGLGLRAVPRGIPR) form the LRRNT domain. LRR repeat units lie at residues 62-83 (NAER…DFAG), 86-107 (NLRV…AFQD), 110-131 (QLER…LFQS), 134-155 (KLTR…AFRG), 158-179 (GVKN…AFRA), and 182-203 (DLEI…SFNH). N72 carries N-linked (GlcNAc...) asparagine glycosylation. An N-linked (GlcNAc...) asparagine glycan is attached at N192. Positions 215 to 265 (NHLYCDCHLAWLSDWLRQRRTIGQFTLCMAPVHLRGFSVADVQKKEYVCPG) constitute an LRRCT 1 domain. The LRRNT 2 domain maps to 271-307 (PACNANSLSCPSACSCSNNIVDCRGKGLTEIPANLPE). C284 and C293 are disulfide-bonded. LRR repeat units lie at residues 308–329 (GIVE…AFTQ), 332–353 (KLKR…AFQG), 356–377 (SLTS…LFDG), 380–401 (SLQL…TFQD), and 404–425 (NLNL…LFVP). The 51-residue stretch at 437–487 (NPFVCDCHLKWLADYLQDNPIETSGARCSSPRRLANKRISQIKSKKFRCSG) folds into the LRRCT 2 domain. 4 disulfides stabilise this stretch: C441/C464, C443/C485, C505/C511, and C509/C518. The LRRNT 3 domain occupies 496-532 (SSECFMDLVCPEKCRCEGTIVDCSNQKLARIPSHLPE). 5 LRR repeats span residues 533–554 (YTTD…GIFK), 558–579 (NLRK…AFDG), 582–603 (GVQE…MFRG), 606–627 (SLKT…TFAG), and 630–651 (SVRL…AFTT). N-linked (GlcNAc...) asparagine glycosylation is present at N563. N622 carries N-linked (GlcNAc...) asparagine glycosylation. The LRRCT 3 domain occupies 663–713 (NPFNCNCHMAWLGRWLRKRRIVSGNPRCQKPFFLKEIPIQDVAIQDFTCDG). Intrachain disulfides connect C667–C690 and C669–C711. Residues 716–752 (ESSCQLSPRCPEQCTCVETVVRCSNRGLHALPKGMPK) form the LRRNT 4 domain. 4 LRR repeats span residues 753-774 (DVTE…LSAF), 776-797 (QLTL…TFSN), 800-821 (HLST…AFNG), and 824-845 (SLRV…SFND). N784, N792, and N797 each carry an N-linked (GlcNAc...) asparagine glycan. One can recognise an LRRCT 4 domain in the interval 857-907 (NPLHCDCSLRWLSEWVKAGYKEPGIARCSSPESMADRLLLTTPTHRFQCKG). EGF-like domains lie at 918–953 (NACL…KDCT), 955–994 (PINT…QRCE), 996–1032 (NPDD…ELCD), 1034–1072 (VIDY…KLCE), 1074–1110 (NNDD…LFCE), and 1119–1155 (QTSP…PRCE). 18 disulfide bridges follow: C920–C931, C925–C941, C943–C952, C959–C970, C964–C982, C984–C993, C1000–C1011, C1005–C1020, C1022–C1031, C1038–C1051, C1045–C1060, C1062–C1071, C1078–C1089, C1083–C1098, C1100–C1109, C1123–C1134, C1128–C1143, and C1145–C1154. N928 is a glycosylation site (N-linked (GlcNAc...) asparagine). Residue N1025 is glycosylated (N-linked (GlcNAc...) asparagine). Residues 1158–1332 (ITVNFVGKDS…PQSLGVSPGC (175 aa)) form the Laminin G-like domain. N-linked (GlcNAc...) asparagine glycosylation is found at N1181 and N1247. Disulfide bonds link C1305/C1332, C1355/C1364, C1372/C1382, C1377/C1391, and C1393/C1402. 2 consecutive EGF-like domains span residues 1340 to 1365 (HGLC…PLCD) and 1368 to 1403 (ARDP…ALCD). Residue N1406 is glycosylated (N-linked (GlcNAc...) asparagine). One can recognise an EGF-like 9 domain in the interval 1408–1444 (SASACSAFKCHHGQCHISDRGEPYCLCQPGFSGHHCE). Cystine bridges form between C1412–C1422, C1417–C1432, C1434–C1443, C1449–C1487, C1467–C1501, C1478–C1517, and C1482–C1519. Residues 1449–1523 (CMGEIVREAI…HLECGCRACS (75 aa)) enclose the CTCK domain.

The protein resides in the secreted. May act as molecular guidance cue in cellular migration, and function may be mediated by interaction with roundabout homolog receptors. The polypeptide is Slit homolog 3 protein (Slit3) (Mus musculus (Mouse)).